The chain runs to 37 residues: Large ribosomal subunit protein bL36 (37 aa).

Belongs to the bacterial ribosomal protein bL36 family.

The sequence is that of Large ribosomal subunit protein bL36 from Persephonella marina (strain DSM 14350 / EX-H1).